Consider the following 377-residue polypeptide: Peroxisomal membrane protein PEX14 (377 aa).

Over residues 1–15 (MASSEQAEQPSQPSS) the composition is skewed to low complexity. The tract at residues 1–24 (MASSEQAEQPSQPSSTPGSENVLP) is disordered. Alanine 2 is subject to N-acetylalanine. Topologically, residues 2-108 (ASSEQAEQPS…YSPAGSRWRD (107 aa)) are peroxisomal matrix. Position 34 is an N6-acetyllysine (lysine 34). Residues 109 to 126 (YGALAIIMAGIAFGFHQL) form a helical membrane-spanning segment. Residues 127 to 377 (YKKYLLPLIL…EGASNESERD (251 aa)) are Cytoplasmic-facing. Residues 230-377 (PPSPSAPKIP…EGASNESERD (148 aa)) form a disordered region. A Phosphoserine modification is found at serine 232. Low complexity-rich tracts occupy residues 244–259 (PVKS…VNHH) and 265–275 (SPVSNESTSSS). 2 positions are modified to phosphoserine: serine 282 and serine 335. Positions 323-342 (KEDEEDEEDDDVSHVDEEDC) are enriched in acidic residues. Residues 360–377 (QVEKLRRPEGASNESERD) are compositionally biased toward basic and acidic residues.

The protein belongs to the peroxin-14 family. Interacts with PEX13; forming the PEX13-PEX14 docking complex. Interacts with PEX5 (via WxxxF/Y motifs). Interacts with PEX19. Interacts with tubulin.

It is found in the peroxisome membrane. In terms of biological role, component of the PEX13-PEX14 docking complex, a translocon channel that specifically mediates the import of peroxisomal cargo proteins bound to PEX5 receptor. The PEX13-PEX14 docking complex forms a large import pore which can be opened to a diameter of about 9 nm. Mechanistically, PEX5 receptor along with cargo proteins associates with the PEX14 subunit of the PEX13-PEX14 docking complex in the cytosol, leading to the insertion of the receptor into the organelle membrane with the concomitant translocation of the cargo into the peroxisome matrix. Plays a key role for peroxisome movement through a direct interaction with tubulin. The polypeptide is Peroxisomal membrane protein PEX14 (Homo sapiens (Human)).